The sequence spans 364 residues: Aminomethyltransferase (364 aa).

This sequence belongs to the GcvT family. As to quaternary structure, the glycine cleavage system is composed of four proteins: P, T, L and H.

The enzyme catalyses N(6)-[(R)-S(8)-aminomethyldihydrolipoyl]-L-lysyl-[protein] + (6S)-5,6,7,8-tetrahydrofolate = N(6)-[(R)-dihydrolipoyl]-L-lysyl-[protein] + (6R)-5,10-methylene-5,6,7,8-tetrahydrofolate + NH4(+). The glycine cleavage system catalyzes the degradation of glycine. The protein is Aminomethyltransferase of Shigella flexneri serotype 5b (strain 8401).